Reading from the N-terminus, the 354-residue chain is MRTVHDDELKKILKIMSPGTSLREGLDNILRAKTGGLIVLGDNEEILDLVDGGFNINSEYSPAYIYELAKMDGALVLTSDRKRILYANAQLMPNQSISTFETGTRHRTAQRVAKQTNKIAIAISQRRNIITVYKGDIKYVLRDSAVILSKANQAIQTLEKYVAVLERVTNNLNILEFQDLATLFDVTTAIQRTEMVMRIVEEIEGYIIELGNEGRLISMQLNELVRSIEQDGVLLIRDYCYDKMEYNDVYKEIQELSAEDLLDLDIIAKELGYVGKSLIDTLVSPRGYRISSKIPRIPSNVIENLVGHFGKLKYILEAGNEELDQVEGIGEARARAIKNGLRRIREQVALNKNL.

One can recognise a DAC domain in the interval 6–144 (DDELKKILKI…GDIKYVLRDS (139 aa)). Residues glycine 73, leucine 91, and 104 to 108 (TRHRT) each bind ATP.

It belongs to the DisA family. In terms of assembly, homooctamer. Mg(2+) serves as cofactor.

It carries out the reaction 2 ATP = 3',3'-c-di-AMP + 2 diphosphate. In terms of biological role, participates in a DNA-damage check-point that is active prior to asymmetric division when DNA is damaged. DisA forms globular foci that rapidly scan along the chromosomes during sporulation, searching for lesions. When a lesion is present, DisA pauses at the lesion site. This triggers a cellular response that culminates in a temporary block in sporulation initiation. Its function is as follows. Also has diadenylate cyclase activity, catalyzing the condensation of 2 ATP molecules into cyclic di-AMP (c-di-AMP). c-di-AMP acts as a signaling molecule that couples DNA integrity with progression of sporulation. The rise in c-di-AMP level generated by DisA while scanning the chromosome, operates as a positive signal that advances sporulation; upon encountering a lesion, the DisA focus arrests at the damaged site and halts c-di-AMP synthesis. This chain is DNA integrity scanning protein DisA, found in Clostridium perfringens (strain SM101 / Type A).